Consider the following 698-residue polypeptide: FHF complex subunit HOOK-interacting protein 2B (698 aa).

The protein belongs to the FHIP family.

The sequence is that of FHF complex subunit HOOK-interacting protein 2B (fhip2b) from Xenopus tropicalis (Western clawed frog).